A 73-amino-acid polypeptide reads, in one-letter code: Homeodomain-only protein (73 aa).

Positions 3–62 form a DNA-binding region, homeobox; degenerate; it reads AETASGPTEDQVEILEYNFNKVDKHPDSTTLCLIAAEAGLSEEETQKWFKQRLAKWRRSE.

Interacts with serum response factor (SRF). Component of a large complex containing histone deacetylases such as HDAC2. Interacts with the acetylated forms of HSPA1A and HSPA1B. Interacts with HSPA8. Widely expressed. Expressed in the heart, brain, placenta, lung, skeletal and smooth muscles, uterus, urinary bladder, kidney and spleen. Down-regulated in some types of cancer such as lung cancer, choriocarcinoma, head and neck squamous cell carcinoma and oral squamous cell carcinoma.

Its subcellular location is the nucleus. It is found in the cytoplasm. Functionally, atypical homeodomain protein which does not bind DNA and is required to modulate cardiac growth and development. Acts via its interaction with SRF, thereby modulating the expression of SRF-dependent cardiac-specific genes and cardiac development. Prevents SRF-dependent transcription either by inhibiting SRF binding to DNA or by recruiting histone deacetylase (HDAC) proteins that prevent transcription by SRF. Overexpression causes cardiac hypertrophy. May act as a tumor suppressor. Acts as a co-chaperone for HSPA1A and HSPA1B chaperone proteins and assists in chaperone-mediated protein refolding. The chain is Homeodomain-only protein (HOPX) from Homo sapiens (Human).